A 199-amino-acid polypeptide reads, in one-letter code: Imidazole glycerol phosphate synthase subunit HisH 2 (199 aa).

The region spanning 1–199 is the Glutamine amidotransferase type-1 domain; that stretch reads MIAVIDVSGN…NNFLSLESKC (199 aa). The Nucleophile role is filled by Cys-76. Residues His-177 and Glu-179 contribute to the active site.

As to quaternary structure, heterodimer of HisH and HisF.

The protein localises to the cytoplasm. It catalyses the reaction 5-[(5-phospho-1-deoxy-D-ribulos-1-ylimino)methylamino]-1-(5-phospho-beta-D-ribosyl)imidazole-4-carboxamide + L-glutamine = D-erythro-1-(imidazol-4-yl)glycerol 3-phosphate + 5-amino-1-(5-phospho-beta-D-ribosyl)imidazole-4-carboxamide + L-glutamate + H(+). The catalysed reaction is L-glutamine + H2O = L-glutamate + NH4(+). Its pathway is amino-acid biosynthesis; L-histidine biosynthesis; L-histidine from 5-phospho-alpha-D-ribose 1-diphosphate: step 5/9. IGPS catalyzes the conversion of PRFAR and glutamine to IGP, AICAR and glutamate. The HisH subunit provides the glutamine amidotransferase activity that produces the ammonia necessary to HisF for the synthesis of IGP and AICAR. This Legionella pneumophila (strain Lens) protein is Imidazole glycerol phosphate synthase subunit HisH 2.